The sequence spans 446 residues: FAD-dependent monooxygenase eupB (446 aa).

A helical membrane pass occupies residues 10-30; it reads EPHIAIVGGGIVGVILTLGLL. A glycan (N-linked (GlcNAc...) asparagine) is linked at asparagine 33. FAD contacts are provided by glutamate 40, alanine 53, and arginine 125. Catalysis depends on residues arginine 206 and tyrosine 239. Asparagine 243 carries N-linked (GlcNAc...) asparagine glycosylation. 2 residues coordinate FAD: aspartate 322 and alanine 335. N-linked (GlcNAc...) asparagine glycosylation is present at asparagine 395.

It belongs to the paxM FAD-dependent monooxygenase family. Requires FAD as cofactor.

It is found in the membrane. It participates in secondary metabolite biosynthesis; terpenoid biosynthesis. FAD-dependent monooxygenase; part of the gene cluster that mediates the biosynthesis of eupenifeldin, a bistropolone meroterpenoid that acts as an antitumor agent. The first step of eupenifeldin biosynthesis is the biosynthesis of 3-methylorcinaldehyde performed by the non-reducing polyketide synthase eupA. Oxidative dearomatization of 3-methylorcinaldehyde likely catalyzed by the FAD-dependent monooxygenase eupB is followed by oxidative ring expansion by the 2-oxoglutarate-dependent dioxygenase eupC to provide the first tropolone metabolite, tropolone stipitaldehyde. In parallel, generation of sesquiterpene alpha-humulene from farnesylpyrophosphate (FPP) is catalyzed by the terpene cyclase eupE. The cytochrome P450 monooxygenase eupD then hydroxylates humulene to humulenol. The putative Diels-Alderase eupF probably catalyzes the formation of the tropolone-humulene skeleton by linking humulenol and the polyketide moiety. The short-chain dehydrogenase/reductase eupG and the flavin-dependent monooxygenase eupH are also essential for eupenifeldin biosynthesis and are likely the additional decorating enzymes of the tropolone-humulene skeleton to produce final eupenifeldin or derivatives. This Phoma sp protein is FAD-dependent monooxygenase eupB.